A 177-amino-acid chain; its full sequence is Large ribosomal subunit protein uL6 (177 aa).

It belongs to the universal ribosomal protein uL6 family. Part of the 50S ribosomal subunit.

Functionally, this protein binds to the 23S rRNA, and is important in its secondary structure. It is located near the subunit interface in the base of the L7/L12 stalk, and near the tRNA binding site of the peptidyltransferase center. This chain is Large ribosomal subunit protein uL6, found in Acidovorax ebreus (strain TPSY) (Diaphorobacter sp. (strain TPSY)).